We begin with the raw amino-acid sequence, 550 residues long: MFCVQCEQTIRTPAGNGCSYAQGMCGKTAETSDLQDLLIAALQGLSAWAVKAREYGIINHDVDSFAPRAFFSTLTNVNFDSPRIVGYAREAIALREALKAQCLAVDANARVDNPMADLQLVSDDLGELQRQAAEFTPNKDKAAIGENILGLRLLCLYGLKGAAAYMEHAHVLGQYDNDIYAQYHKIMAWLGTWPADMNALLECSMEIGQMNFKVMSILDAGETGKYGHPTPTQVNVKATAGKCILISGHDLKDLYNLLEQTEGTGVNVYTHGEMLPAHGYPELRKFKHLVGNYGSGWQNQQVEFARFPGPIVMTSNCIIDPTVSAYDDRIWTRSIVGWPGVRHLDGDDFSAVITQAQQMAGFPYSEIPHLITVGFGRQTLLGAADTLIDLVSREKLRHIFLLGGCDGARGERHYFTDFATIVPDDCLILTLACGKYRFNKLEFGDIEGLPRLVDAGQCNDAYSAIILAVTLAEKLGCGVNDLPLSLVLSWFEQKAIVILLTLLSLGVKNIVTGPTAPGFLTPDLLAVLNEKFGLRSITTVEEDMKQLLSA.

4 residues coordinate [2Fe-2S] cluster: C3, C6, C18, and C25. 8 residues coordinate hybrid [4Fe-2O-2S] cluster: H249, E273, C317, C405, C433, C458, E492, and K494. C405 is modified (cysteine persulfide).

The protein belongs to the HCP family. Requires [2Fe-2S] cluster as cofactor. The cofactor is hybrid [4Fe-2O-2S] cluster.

It localises to the cytoplasm. It carries out the reaction A + NH4(+) + H2O = hydroxylamine + AH2 + H(+). Catalyzes the reduction of hydroxylamine to form NH(3) and H(2)O. The chain is Hydroxylamine reductase from Shigella boydii serotype 18 (strain CDC 3083-94 / BS512).